The sequence spans 622 residues: Probable potassium transport system protein Kup (622 aa).

The next 12 helical transmembrane spans lie at 8–28 (LAAL…TSVL), 50–70 (VLSV…VVLV), 100–120 (GWLL…GVIT), 137–157 (PHFG…LFAV), 169–189 (FGPV…PHIV), 203–223 (ALGF…AVVL), 247–267 (WFSV…ALLL), 285–305 (ALVP…QALI), 337–357 (IYLP…VVMF), 366–386 (AYGI…FFVI), 392–412 (YPLA…LAFF), and 419–439 (LLQG…LMMT).

The protein belongs to the HAK/KUP transporter (TC 2.A.72) family.

Its subcellular location is the cell inner membrane. It catalyses the reaction K(+)(in) + H(+)(in) = K(+)(out) + H(+)(out). Its function is as follows. Transport of potassium into the cell. Likely operates as a K(+):H(+) symporter. The chain is Probable potassium transport system protein Kup from Acidovorax ebreus (strain TPSY) (Diaphorobacter sp. (strain TPSY)).